The chain runs to 362 residues: 3-isopropylmalate dehydrogenase (362 aa).

78-91 contacts NAD(+); sequence GPKWETLPPDEQPE. The substrate site is built by Arg-99, Arg-109, Arg-138, and Asp-227. The Mg(2+) site is built by Asp-227, Asp-251, and Asp-255. 285–297 provides a ligand contact to NAD(+); sequence GSAPDIAGQGIAN.

Belongs to the isocitrate and isopropylmalate dehydrogenases family. LeuB type 1 subfamily. Homodimer. Mg(2+) is required as a cofactor. Requires Mn(2+) as cofactor.

It is found in the cytoplasm. The catalysed reaction is (2R,3S)-3-isopropylmalate + NAD(+) = 4-methyl-2-oxopentanoate + CO2 + NADH. The protein operates within amino-acid biosynthesis; L-leucine biosynthesis; L-leucine from 3-methyl-2-oxobutanoate: step 3/4. Functionally, catalyzes the oxidation of 3-carboxy-2-hydroxy-4-methylpentanoate (3-isopropylmalate) to 3-carboxy-4-methyl-2-oxopentanoate. The product decarboxylates to 4-methyl-2 oxopentanoate. The chain is 3-isopropylmalate dehydrogenase from Geobacter metallireducens (strain ATCC 53774 / DSM 7210 / GS-15).